We begin with the raw amino-acid sequence, 1392 residues long: DNA-directed RNA polymerase subunit beta (1392 aa).

Positions L1372–E1392 are disordered.

The protein belongs to the RNA polymerase beta chain family. In terms of assembly, the RNAP catalytic core consists of 2 alpha, 1 beta, 1 beta' and 1 omega subunit. When a sigma factor is associated with the core the holoenzyme is formed, which can initiate transcription.

The enzyme catalyses RNA(n) + a ribonucleoside 5'-triphosphate = RNA(n+1) + diphosphate. DNA-dependent RNA polymerase catalyzes the transcription of DNA into RNA using the four ribonucleoside triphosphates as substrates. The polypeptide is DNA-directed RNA polymerase subunit beta (Sphingopyxis alaskensis (strain DSM 13593 / LMG 18877 / RB2256) (Sphingomonas alaskensis)).